The chain runs to 463 residues: Methionine aminopeptidase 2-1 (463 aa).

The tract at residues 1 to 98 (MGSKTPEEQI…PPRVPLSDLF (98 aa)) is disordered. The span at 30–45 (RGTHLSRDGDGSLGDH) shows a compositional bias: basic and acidic residues. The span at 46 to 55 (GDDDDADEDD) shows a compositional bias: acidic residues. Basic residues predominate over residues 69 to 81 (KKKKRPKKKKKPA). A substrate-binding site is contributed by histidine 214. A divalent metal cation contacts are provided by aspartate 235, aspartate 246, and histidine 315. Position 323 (histidine 323) interacts with substrate. Glutamate 348 and glutamate 444 together coordinate a divalent metal cation.

The protein belongs to the peptidase M24A family. Methionine aminopeptidase eukaryotic type 2 subfamily. The cofactor is Co(2+). Requires Zn(2+) as cofactor. Mn(2+) is required as a cofactor. Fe(2+) serves as cofactor.

The protein resides in the cytoplasm. The catalysed reaction is Release of N-terminal amino acids, preferentially methionine, from peptides and arylamides.. Cotranslationally removes the N-terminal methionine from nascent proteins. The N-terminal methionine is often cleaved when the second residue in the primary sequence is small and uncharged (Met-Ala-, Cys, Gly, Pro, Ser, Thr, or Val). The polypeptide is Methionine aminopeptidase 2-1 (Colletotrichum graminicola (strain M1.001 / M2 / FGSC 10212) (Maize anthracnose fungus)).